We begin with the raw amino-acid sequence, 32 residues long: U3-theraphotoxin-Hhn1r (32 aa).

3 disulfide bridges follow: Cys2/Cys15, Cys9/Cys20, and Cys14/Cys27.

The protein belongs to the neurotoxin 10 (Hwtx-1) family. 16 (Hntx-8) subfamily. As to expression, expressed by the venom gland.

The protein resides in the secreted. Its function is as follows. Ion channel inhibitor. This chain is U3-theraphotoxin-Hhn1r, found in Cyriopagopus hainanus (Chinese bird spider).